The sequence spans 1146 residues: Ankyrin repeat and fibronectin type-III domain-containing protein 1 (1146 aa).

2 ANK repeats span residues 133–162 and 170–199; these read QGNE…PEEL and EGLT…RESP. The Fibronectin type-III domain maps to 270-366; that stretch reads MPTNVCLMVT…TTTPACASPS (97 aa). Residues 607-614 are highly conserved peptide sequence; it reads GLYLGYLK. 3 disordered regions span residues 855–887, 945–964, and 1106–1146; these read NSTS…QPCS, VKTP…NPDH, and PWAS…SSML. A compositionally biased stretch (polar residues) spans 1131 to 1146; the sequence is EGPTASPMSEILSSML.

May play a role in neuronal function. This Homo sapiens (Human) protein is Ankyrin repeat and fibronectin type-III domain-containing protein 1.